The primary structure comprises 142 residues: Putative phosphatidylglycerol/phosphatidylinositol transfer protein 2 (142 aa).

A signal peptide spans 1–20 (MKFYLYLSILLILLTSTSFG).

It belongs to the NPC2 family. In terms of assembly, monomer.

In terms of biological role, catalyzes the intermembrane transfer of phosphatidylglycerol and phosphatidylinositol. The protein is Putative phosphatidylglycerol/phosphatidylinositol transfer protein 2 of Dictyostelium discoideum (Social amoeba).